The following is a 123-amino-acid chain: MNLRIAMAIALGGAFGAVARFYISGLLPVYRDFPVGTLMVNSIASLILGYLYGLLFWGFDVPPDWRAFFGTGFCGALSTFSTFSYETFSLLREREYLIATLNILANVIITIALVFAGFMLARR.

4 consecutive transmembrane segments (helical) span residues 7 to 27, 39 to 59, 68 to 88, and 101 to 121; these read MAIA…SGLL, MVNS…FWGF, FFGT…YETF, and LNIL…FMLA. Residues glycine 75 and serine 78 each contribute to the Na(+) site.

This sequence belongs to the fluoride channel Fluc/FEX (TC 1.A.43) family.

Its subcellular location is the cell membrane. The catalysed reaction is fluoride(in) = fluoride(out). With respect to regulation, na(+) is not transported, but it plays an essential structural role and its presence is essential for fluoride channel function. Its function is as follows. Fluoride-specific ion channel. Important for reducing fluoride concentration in the cell, thus reducing its toxicity. This chain is Fluoride-specific ion channel FluC, found in Thermococcus kodakarensis (strain ATCC BAA-918 / JCM 12380 / KOD1) (Pyrococcus kodakaraensis (strain KOD1)).